The primary structure comprises 902 residues: Translation initiation factor IF-2 (902 aa).

Composition is skewed to basic and acidic residues over residues 1-12 (MVDTKTPGDKKL) and 43-60 (VVEKRGKRRIGDGPEPHA). The disordered stretch occupies residues 1–276 (MVDTKTPGDK…KPGPQKERGR (276 aa)). Residues 69 to 84 (PAAPAPSRPAPPPAPP) are compositionally biased toward pro residues. Positions 111-174 (AKLREVEERR…ETEAKKRFGE (64 aa)) are enriched in basic and acidic residues. Low complexity-rich tracts occupy residues 181–190 (AARPATAAPA) and 198–237 (APAARPGTTTTRPGTTTARPATTTAQRPGAPAGRGPAVAA). The region spanning 398 to 567 (TRSPVVTVMG…MIALQADILD (170 aa)) is the tr-type G domain. A G1 region spans residues 407–414 (GHVDHGKT). 407-414 (GHVDHGKT) serves as a coordination point for GTP. The interval 432–436 (GITQH) is G2. The tract at residues 455-458 (DTPG) is G3. Residues 455–459 (DTPGH) and 509–512 (NKID) each bind GTP. Residues 509 to 512 (NKID) are G4. The tract at residues 545–547 (SAK) is G5.

This sequence belongs to the TRAFAC class translation factor GTPase superfamily. Classic translation factor GTPase family. IF-2 subfamily.

The protein localises to the cytoplasm. In terms of biological role, one of the essential components for the initiation of protein synthesis. Protects formylmethionyl-tRNA from spontaneous hydrolysis and promotes its binding to the 30S ribosomal subunits. Also involved in the hydrolysis of GTP during the formation of the 70S ribosomal complex. This Bradyrhizobium diazoefficiens (strain JCM 10833 / BCRC 13528 / IAM 13628 / NBRC 14792 / USDA 110) protein is Translation initiation factor IF-2.